Consider the following 155-residue polypeptide: S-ribosylhomocysteine lyase (155 aa).

Residues histidine 57, histidine 61, and cysteine 124 each contribute to the Fe cation site.

It belongs to the LuxS family. In terms of assembly, homodimer. The cofactor is Fe cation.

It catalyses the reaction S-(5-deoxy-D-ribos-5-yl)-L-homocysteine = (S)-4,5-dihydroxypentane-2,3-dione + L-homocysteine. Involved in the synthesis of autoinducer 2 (AI-2) which is secreted by bacteria and is used to communicate both the cell density and the metabolic potential of the environment. The regulation of gene expression in response to changes in cell density is called quorum sensing. Catalyzes the transformation of S-ribosylhomocysteine (RHC) to homocysteine (HC) and 4,5-dihydroxy-2,3-pentadione (DPD). The sequence is that of S-ribosylhomocysteine lyase from Listeria monocytogenes serovar 1/2a (strain ATCC BAA-679 / EGD-e).